We begin with the raw amino-acid sequence, 61 residues long: Small ribosomal subunit protein uS14 (61 aa).

Zn(2+)-binding residues include cysteine 24, cysteine 27, cysteine 40, and cysteine 43.

This sequence belongs to the universal ribosomal protein uS14 family. Zinc-binding uS14 subfamily. In terms of assembly, part of the 30S ribosomal subunit. Contacts proteins S3 and S10. The cofactor is Zn(2+).

In terms of biological role, binds 16S rRNA, required for the assembly of 30S particles and may also be responsible for determining the conformation of the 16S rRNA at the A site. The polypeptide is Small ribosomal subunit protein uS14 (Caldicellulosiruptor bescii (strain ATCC BAA-1888 / DSM 6725 / KCTC 15123 / Z-1320) (Anaerocellum thermophilum)).